Consider the following 255-residue polypeptide: Phosphoribosylaminoimidazole-succinocarboxamide synthase A (255 aa).

It belongs to the SAICAR synthetase family.

It catalyses the reaction 5-amino-1-(5-phospho-D-ribosyl)imidazole-4-carboxylate + L-aspartate + ATP = (2S)-2-[5-amino-1-(5-phospho-beta-D-ribosyl)imidazole-4-carboxamido]succinate + ADP + phosphate + 2 H(+). It participates in purine metabolism; IMP biosynthesis via de novo pathway; 5-amino-1-(5-phospho-D-ribosyl)imidazole-4-carboxamide from 5-amino-1-(5-phospho-D-ribosyl)imidazole-4-carboxylate: step 1/2. This chain is Phosphoribosylaminoimidazole-succinocarboxamide synthase A (purC1), found in Bradyrhizobium diazoefficiens (strain JCM 10833 / BCRC 13528 / IAM 13628 / NBRC 14792 / USDA 110).